A 126-amino-acid polypeptide reads, in one-letter code: Glycine cleavage system H protein (126 aa).

One can recognise a Lipoyl-binding domain in the interval 22 to 104 (KLRIGITDFA…YEKAWMIVIE (83 aa)). Position 63 is an N6-lipoyllysine (Lys-63).

The protein belongs to the GcvH family. In terms of assembly, the glycine cleavage system is composed of four proteins: P, T, L and H. (R)-lipoate is required as a cofactor.

In terms of biological role, the glycine cleavage system catalyzes the degradation of glycine. The H protein shuttles the methylamine group of glycine from the P protein to the T protein. Is also involved in protein lipoylation via its role as an octanoyl/lipoyl carrier protein intermediate. This is Glycine cleavage system H protein from Oceanobacillus iheyensis (strain DSM 14371 / CIP 107618 / JCM 11309 / KCTC 3954 / HTE831).